The chain runs to 431 residues: GDP-L-galactose phosphorylase 2 (431 aa).

H235 (tele-GMP-histidine intermediate) is an active-site residue. The span at 398 to 407 shows a compositional bias: acidic residues; the sequence is EEEEEEELEE. Residues 398–417 form a disordered region; it reads EEEEEEELEEQNSMNGGSFT.

Belongs to the GDPGP1 family. Interacts with TLP1. Expressed in leaves, stems, roots, flowers and siliques.

The protein resides in the cytoplasm. It localises to the nucleus. It carries out the reaction GDP-beta-L-galactose + phosphate = beta-L-galactose 1-phosphate + GDP + H(+). Its pathway is cofactor biosynthesis; L-ascorbate biosynthesis via GDP-alpha-D-mannose pathway; L-ascorbate from GDP-alpha-D-mannose: step 2/5. In terms of biological role, catalyzes a reaction of the Smirnoff-Wheeler pathway, the major route to ascorbate biosynthesis in plants. Acts as a phosphorylase rather than as a transferase. Uses preferentially GDP-L-galactose and GDP-D-glucose as substrates. Lower activity with GDP-L-fucose, very low activity with GDP-D-mannose, and no activity with UDP-D-glucose, UDP-D-galactose or ADP-D-glucose. Highly specific for inorganic phosphate as the guanylyl acceptor. The sequence is that of GDP-L-galactose phosphorylase 2 (VTC5) from Arabidopsis thaliana (Mouse-ear cress).